Here is a 636-residue protein sequence, read N- to C-terminus: Probable potassium transport system protein Kup (636 aa).

The next 12 membrane-spanning stretches (helical) occupy residues 22–42 (VGLL…SPLY), 64–84 (ILSL…VMFI), 115–135 (LMVI…MITP), 150–170 (FDGI…ALFL), 182–202 (LFGP…VHGI), 220–240 (FFVV…LALT), 261–281 (WFIL…ALLL), 293–313 (LLAP…ATVI), 351–371 (IYIG…VIGF), 383–403 (VAVT…MLLL), 408–428 (PLLA…FFAA), and 433–453 (IAQG…LMST).

This sequence belongs to the HAK/KUP transporter (TC 2.A.72) family.

Its subcellular location is the cell inner membrane. The catalysed reaction is K(+)(in) + H(+)(in) = K(+)(out) + H(+)(out). In terms of biological role, transport of potassium into the cell. Likely operates as a K(+):H(+) symporter. The polypeptide is Probable potassium transport system protein Kup (Pseudomonas putida (strain ATCC 47054 / DSM 6125 / CFBP 8728 / NCIMB 11950 / KT2440)).